Reading from the N-terminus, the 423-residue chain is Ankyrin repeat and SAM domain-containing protein 4B (423 aa).

Residues 1-251 (MSTRYHQAAS…PKDFKEKLHF (251 aa)) form a mediates localization to microvilli region. ANK repeat units lie at residues 31-60 (DGMT…DPDK), 64-93 (WGNT…NIFA), and 97-126 (DLKS…VQNT). Residues 130-169 (KRVTRLKEQALKNARKQMKECERLQERHQNKMARTYSKED) are a coiled coil. 3 disordered regions span residues 158-181 (QNKM…STLS), 207-227 (KSKK…SGQR), and 303-335 (QRQG…AGDL). Over residues 171–181 (GTISSSHSTLS) the composition is skewed to low complexity. Residues 207–224 (KSKKNKDTTEQLEKDGRS) are compositionally biased toward basic and acidic residues. The interval 253-352 (VEEDDDVQHE…EWEEDAVDAT (100 aa)) is mediates interaction with MYO7B. Positions 301-335 (LFQRQGAAGTVEEEEEEEEEEEEEKREANGTAGDL) form a coiled coil. Over residues 311 to 324 (VEEEEEEEEEEEEE) the composition is skewed to acidic residues. One can recognise an SAM domain in the interval 357–409 (FLQSQHLEEFLPIFMREQIDLEALLLCSDEDLQNIHMQLGPRKKVLSAIDKRK). Residues 421-423 (TSL) carry the PDZ-binding; mediates interaction with USH1C motif.

Part of the IMAC/intermicrovillar adhesion complex/intermicrovillar tip-link complex composed of ANKS4B, MYO7B, USH1C, CDHR2 and CDHR5. Interacts with USH1C; the interaction is direct and is required for ANKS4B localization to the tip of microvilli. Interacts with MYO7B; the interaction is direct. May interact with HSPA5. Cochlea, kidney, lung, liver, pancreas, salivary gland and small intestine (at protein level). Expressed in kidney, small intestine, pancreas, liver and colon. Not detected in heart, spleen and brain.

It localises to the cell projection. Its subcellular location is the microvillus. Its function is as follows. As part of the intermicrovillar adhesion complex/IMAC plays a role in epithelial brush border differentiation, controlling microvilli organization and length. Plays a role in assembly of the complex. May play a role in cellular response to endoplasmic reticulum stress. The protein is Ankyrin repeat and SAM domain-containing protein 4B of Mus musculus (Mouse).